A 682-amino-acid chain; its full sequence is TBC1 domain family member 23 (682 aa).

A Rab-GAP TBC domain is found at 29–210; sequence PVPCDLRTKV…AIWDNYLQQA (182 aa). The Rhodanese domain occupies 318-426; that stretch reads DGVRFFVVDC…GFMALQQHLA (109 aa).

It localises to the golgi apparatus. The protein localises to the trans-Golgi network. It is found in the cytoplasmic vesicle. Its function is as follows. Putative Rab GTPase-activating protein which plays a role in vesicular trafficking. Involved in endosome-to-Golgi trafficking. Acts as a bridging protein by binding simultaneously to golgins, located at the trans-Golgi, and to the WASH complex, located on endosome-derived vesicles. Plays a role in brain development. May act as a general inhibitor of innate immunity signaling. The chain is TBC1 domain family member 23 (tbc1d23) from Xenopus laevis (African clawed frog).